The following is a 172-amino-acid chain: Ribosomally synthesized cyclic peptide phomopsin precursor phomA (172 aa).

An N-terminal signal peptide occupies residues 1–18 (MRFTPAIVIAAFCSLAVA). 11 consecutive propeptides follow at residues 19-35 (APAAKAIARSPSEAVED), 42-50 (KKRGEAVED), 57-65 (KKRGEAVED), 72-79 (KRGEAVED), 86-93 (KRGEAVED), 100-108 (KKRGEAVED), 115-122 (KRGEAVED), 129-137 (RKRGEAVED), 144-151 (KRGEAVED), 158-165 (KRGEAVED), and K172.

PhomA is processed by several endopeptidases including kexin proteases as well as the cluster-specific S41 family peptidase phomP1 and the oligopeptidase phomG to produce 10 identical copies of the hexapeptide Tyr-Val-Ile-Pro-Ile-Asp, that is further modified to yield phomapsins. The timing and order of proteolysis of the phomA precursor and PTMs are still unknown. Two tyrosinase-like enzymes, phomQ1 and phomQ2, catalyze the chlorination and hydroxylation of Tyr, respectively. PhomYb, is proposed to be involved in the construction of the macrocyclic structure. The other 4 ustYa family proteins may be involved in PTMs that generate the unique structure of phomopsin A. PhomYa is required for the hydroxylation of C-beta of Tyr. PhomYc, phomYd, and phomYe are responsible for the biosynthesis of 2,3-dehydroisoleucine (dIle), 2,3-dehydroaspartic acid (dAsp), and 3,4-dehydroproline (dPro), respectively. While dIle formation by phomYc is indispensable for the installation of dAsp by phomYd, the order of the other PTMs have not been elucidated yet. Most of the biosynthetic enzymes likely have broad substrate specificity, and thus, there might be a metabolic grid from a precursor to phomopsin A. The enzyme(s) responsible for the biosynthesis of 3,4-dehydrovaline (dVal) have also not been identified yet. Finally, phomM acts as an S-adenosylmethionine-dependent alpha-N-methyltransferase that catalyzes two successive N-methylation reactions, converting N-desmethyl-phomopsin A to phomopsin A and phomopsin A further to an N,N-dimethylated congener called phomopsin E.

It functions in the pathway mycotoxin biosynthesis. In terms of biological role, ribosomally synthesized cyclic peptide phomopsin precursor; part of the gene cluster that mediates the biosynthesis of the phomopsins, a group of hexapeptide mycotoxins which infects lupins and causes lupinosis disease in livestock. The phomA translated product contains a 10-fold repeated peptide embedding the hexapeptide Tyr-Val-Ile-Pro-Ile-Asp, that is converted into phomapsins. After being excised from the precursor peptide by kexin proteases, the core peptides are cyclized and modified post-translationally by enzymes encoded within the corresponding gene cluster. This is Ribosomally synthesized cyclic peptide phomopsin precursor phomA from Diaporthe leptostromiformis (Lupinosis disease fungus).